The sequence spans 191 residues: MSKRNKELLEIGRDIGGDEAVEIIKALEKKGEATDEELAEITGIRVNTVRKILYALYDAKLADFRRVKDDETGWYYYYWHIETKRLPEIIRARKMQELEKLKKMLQEETSEVYYHCGNPDHPKLTFDEAFEYGFVCPICGEILHQYDNSAVIEELKKRIEELEIELGLRAPPKKEKKGKKSKKRSKKSKKK.

The HTH TFE/IIEalpha-type domain occupies 4 to 87; it reads RNKELLEIGR…YWHIETKRLP (84 aa). Residues 170-191 form a disordered region; it reads APPKKEKKGKKSKKRSKKSKKK. Positions 174–191 are enriched in basic residues; that stretch reads KEKKGKKSKKRSKKSKKK.

Belongs to the TFE family. As to quaternary structure, monomer. Interaction with RNA polymerase subunits RpoF and RpoE is necessary for Tfe stimulatory transcription activity. Able to interact with Tbp and RNA polymerase in the absence of DNA promoter. Interacts both with the preinitiation and elongation complexes.

Functionally, transcription factor that plays a role in the activation of archaeal genes transcribed by RNA polymerase. Facilitates transcription initiation by enhancing TATA-box recognition by TATA-box-binding protein (Tbp), and transcription factor B (Tfb) and RNA polymerase recruitment. Not absolutely required for transcription in vitro, but particularly important in cases where Tbp or Tfb function is not optimal. It dynamically alters the nucleic acid-binding properties of RNA polymerases by stabilizing the initiation complex and destabilizing elongation complexes. Seems to translocate with the RNA polymerase following initiation and acts by binding to the non template strand of the transcription bubble in elongation complexes. The protein is Transcription factor E of Pyrococcus horikoshii (strain ATCC 700860 / DSM 12428 / JCM 9974 / NBRC 100139 / OT-3).